We begin with the raw amino-acid sequence, 151 residues long: UPF0719 transmembrane protein MAP_1032c (151 aa).

Transmembrane regions (helical) follow at residues 20–40 (VATILYFAVGMAVLLVGFYAV), 60–80 (AVVVAGAMYIALTVVIITAIA), 90–110 (LVGVAVYGLMGVILLGVALLA), and 130–150 (PGSFAVALILLAVGGVTAAAV).

It belongs to the UPF0719 family.

It localises to the cell membrane. The polypeptide is UPF0719 transmembrane protein MAP_1032c (Mycolicibacterium paratuberculosis (strain ATCC BAA-968 / K-10) (Mycobacterium paratuberculosis)).